The chain runs to 88 residues: Apolipoprotein C-I (88 aa).

A signal peptide spans 1-26 (MRLILSLPVLVVVLSMVLEGPAPAQA).

This sequence belongs to the apolipoprotein C1 family. Expressed in the liver.

It is found in the secreted. Functionally, inhibitor of lipoprotein binding to the low density lipoprotein (LDL) receptor, LDL receptor-related protein, and very low density lipoprotein (VLDL) receptor. Associates with high density lipoproteins (HDL) and the triacylglycerol-rich lipoproteins in the plasma and makes up about 10% of the protein of the VLDL and 2% of that of HDL. Appears to interfere directly with fatty acid uptake and is also the major plasma inhibitor of cholesteryl ester transfer protein (CETP). Binds free fatty acids and reduces their intracellular esterification. Modulates the interaction of APOE with beta-migrating VLDL and inhibits binding of beta-VLDL to the LDL receptor-related protein. The sequence is that of Apolipoprotein C-I (APOC1) from Canis lupus familiaris (Dog).